Consider the following 763-residue polypeptide: 1,4-alpha-glucan branching enzyme GlgB (763 aa).

Asp-437 serves as the catalytic Nucleophile. Catalysis depends on Glu-488, which acts as the Proton donor.

This sequence belongs to the glycosyl hydrolase 13 family. GlgB subfamily. As to quaternary structure, monomer.

The enzyme catalyses Transfers a segment of a (1-&gt;4)-alpha-D-glucan chain to a primary hydroxy group in a similar glucan chain.. It functions in the pathway glycan biosynthesis; glycogen biosynthesis. Functionally, catalyzes the formation of the alpha-1,6-glucosidic linkages in glycogen by scission of a 1,4-alpha-linked oligosaccharide from growing alpha-1,4-glucan chains and the subsequent attachment of the oligosaccharide to the alpha-1,6 position. This is 1,4-alpha-glucan branching enzyme GlgB from Synechococcus sp. (strain JA-2-3B'a(2-13)) (Cyanobacteria bacterium Yellowstone B-Prime).